We begin with the raw amino-acid sequence, 235 residues long: Homeobox-leucine zipper protein ATHB-12 (235 aa).

Positions 27 to 86 form a DNA-binding region, homeobox; the sequence is KSNNQKRFSEEQIKSLELIFESETRLEPRKKVQVARELGLQPRQVAIWFQNKRARWKTKQ. The segment at 87–122 is leucine-zipper; it reads LEKEYNTLRANYNNLASQFEIMKKEKQSLVSELQRL. Basic and acidic residues-rich tracts occupy residues 128–138 and 152–162; these read RPKEEKHHECC and HNGKSEPEGRL. Positions 128–167 are disordered; it reads RPKEEKHHECCGDQGLALSSSTESHNGKSEPEGRLDQGSV.

The protein belongs to the HD-ZIP homeobox family. Class I subfamily. In terms of assembly, interacts with TFIIB1. Widely expressed.

The protein localises to the nucleus. Probable transcription activator that may act as growth regulators in response to water deficit. This Arabidopsis thaliana (Mouse-ear cress) protein is Homeobox-leucine zipper protein ATHB-12 (ATHB-12).